Here is a 257-residue protein sequence, read N- to C-terminus: Acetylglutamate kinase (257 aa).

Residues 43-44 (GG), Arg65, and Asn157 each bind substrate. ATP-binding positions include 180 to 185 (DVSGIL) and 208 to 210 (IIT).

The protein belongs to the acetylglutamate kinase family. ArgB subfamily. As to quaternary structure, homodimer.

The protein localises to the cytoplasm. The catalysed reaction is N-acetyl-L-glutamate + ATP = N-acetyl-L-glutamyl 5-phosphate + ADP. It functions in the pathway amino-acid biosynthesis; L-arginine biosynthesis; N(2)-acetyl-L-ornithine from L-glutamate: step 2/4. Functionally, catalyzes the ATP-dependent phosphorylation of N-acetyl-L-glutamate. This chain is Acetylglutamate kinase, found in Photorhabdus laumondii subsp. laumondii (strain DSM 15139 / CIP 105565 / TT01) (Photorhabdus luminescens subsp. laumondii).